We begin with the raw amino-acid sequence, 20 residues long: Protease inhibitor (20 aa).

As to quaternary structure, monomer. In terms of processing, glycosylated. Stored in epidermis and secreted into the hemolymph and cuticle. Not detected in the interior of the epidermis, fat body cells or columnar or goblet cells of the midgut epithelium (at protein level).

In terms of biological role, inhibits trypsin and chymotrypsin. The protein is Protease inhibitor of Antheraea mylitta (Tasar silkworm).